Consider the following 179-residue polypeptide: Translation initiation factor IF-3 (179 aa).

The protein belongs to the IF-3 family. As to quaternary structure, monomer.

It localises to the cytoplasm. In terms of biological role, IF-3 binds to the 30S ribosomal subunit and shifts the equilibrium between 70S ribosomes and their 50S and 30S subunits in favor of the free subunits, thus enhancing the availability of 30S subunits on which protein synthesis initiation begins. This chain is Translation initiation factor IF-3, found in Leptospira borgpetersenii serovar Hardjo-bovis (strain L550).